An 85-amino-acid chain; its full sequence is MKLVNIGFGNMVVSSRIVAIISPDSAPIKRFLSDAKTRNELIDATYGRKTRAVLVLDSGHIVLSALHPETIAARIEGGDKEEESY.

Belongs to the RemA family.

The polypeptide is Putative regulatory protein DICTH_1339 (Dictyoglomus thermophilum (strain ATCC 35947 / DSM 3960 / H-6-12)).